We begin with the raw amino-acid sequence, 393 residues long: 2-nitroimidazole transporter (393 aa).

At 1 to 12 (MTCSTSLSGKNR) the chain is on the cytoplasmic side. A helical transmembrane segment spans residues 13–33 (IVLIAGILMIATTLRVTFTGA). At 34 to 52 (APLLDTIRSAYSLTTAQTG) the chain is on the periplasmic side. A helical transmembrane segment spans residues 53–73 (LLTTLPLLAFALISPLAAPVA). At 74–80 (RRFGMER) the chain is on the cytoplasmic side. Transmembrane regions (helical) follow at residues 81–101 (SLFAALLLICAGIAIRSLPSP) and 102–122 (YLLFGGTAVIGGGIALGNVLL). Residues 123-140 (PGLIKRDFPHSVARLTGA) lie on the Cytoplasmic side of the membrane. Residues 141–161 (YSLTMGAAAALGSAMVVPLAL) traverse the membrane as a helical segment. The Periplasmic portion of the chain corresponds to 162–163 (NG). A helical transmembrane segment spans residues 164–184 (FGWQGALLMLMCFPLLALFLW). Topologically, residues 185-218 (LPQWRSQQHANLSTSRALHTRGIWRSPLAWQVTL) are cytoplasmic. The chain crosses the membrane as a helical span at residues 219–239 (FLGINSLVYYVIIGWLPAILI). The Periplasmic segment spans residues 240-249 (SHGYSEAQAG). Residues 250–270 (SLHGLLQLATAAPGLLIPLFL) traverse the membrane as a helical segment. Residues 271–278 (HHVKDQRG) are Cytoplasmic-facing. A helical transmembrane segment spans residues 279 to 299 (IAAFVALMCAVGAVGLCFMPA). Topologically, residues 300 to 304 (HAITW) are periplasmic. The chain crosses the membrane as a helical span at residues 305–325 (TLLFGFGSGATMILGLTFIGL). The Cytoplasmic portion of the chain corresponds to 326 to 334 (RASSAHQAA). A helical transmembrane segment spans residues 335 to 355 (ALSGMAQSVGYLLAACGPPLM). Topologically, residues 356–366 (GKIHDANGNWS) are periplasmic. The chain crosses the membrane as a helical span at residues 367–387 (VPLMGVAILSLLMAIFGLCAG). Over 388–393 (RDKEIR) the chain is Cytoplasmic.

Belongs to the major facilitator superfamily. Cyanate porter (TC 2.A.1.17) family.

It is found in the cell inner membrane. In terms of biological role, involved in efflux of 2-nitroimidazole. The sequence is that of 2-nitroimidazole transporter from Escherichia coli (strain K12).